A 253-amino-acid chain; its full sequence is Patatin-like phospholipase domain-containing protein 4 (253 aa).

The 171-residue stretch at 6–176 folds into the PNPLA domain; that stretch reads LSFAACGFLG…TNALPILPVG (171 aa). The GXSXG signature appears at 41 to 45; it reads GASAG. Residue serine 43 is the Nucleophile of the active site. The Proton acceptor role is filled by aspartate 163. Residues 163 to 165 carry the DGA/G motif; it reads DGG.

In terms of tissue distribution, expressed in all tissues examined, including heart, brain, placenta, lung, liver, muscle, kidney, pancreas and spleen.

The protein localises to the mitochondrion. The catalysed reaction is a triacylglycerol + H2O = a diacylglycerol + a fatty acid + H(+). The enzyme catalyses a 1,2-diacyl-sn-glycero-3-phosphocholine + H2O = a 1-acyl-sn-glycero-3-phosphocholine + a fatty acid + H(+). It catalyses the reaction an all-trans-retinyl ester + H2O = all-trans-retinol + a fatty acid + H(+). It carries out the reaction 2 a 1-acylglycerol = a 1,2-diacylglycerol + glycerol. The catalysed reaction is a 1-acylglycerol + a 1,2-diacylglycerol = a triacylglycerol + glycerol. The enzyme catalyses a 1-acylglycerol + a 1,3-diacylglycerol = a triacylglycerol + glycerol. It catalyses the reaction a triacylglycerol + H2O = a 1,2-diacylglycerol + a fatty acid + H(+). It carries out the reaction a triacylglycerol + H2O = a 1,3-diacylglycerol + a fatty acid + H(+). The catalysed reaction is a triacylglycerol + all-trans-retinol = an all-trans-retinyl ester + a diacylglycerol. The enzyme catalyses 2 1-(9Z-octadecenoyl)-glycerol = 1,2-di-(9Z-octadecenoyl)-glycerol + glycerol. It catalyses the reaction 1-(9Z-octadecenoyl)-glycerol + 1,2-di-(9Z-octadecenoyl)-glycerol = 1,2,3-tri-(9Z-octadecenoyl)-glycerol + glycerol. It carries out the reaction 1-(9Z-octadecenoyl)-glycerol + 1,3-di-(9Z-octadecenoyl)-glycerol = 1,2,3-tri-(9Z-octadecenoyl)-glycerol + glycerol. The catalysed reaction is 1,2-di-(9Z-octadecenoyl)-glycerol + (9Z)-octadecenoate + H(+) = 1,2,3-tri-(9Z-octadecenoyl)-glycerol + H2O. The enzyme catalyses 1,2,3-tri-(9Z-octadecenoyl)-glycerol + H2O = 1,3-di-(9Z-octadecenoyl)-glycerol + (9Z)-octadecenoate + H(+). It catalyses the reaction all-trans-retinyl hexadecanoate + H2O = all-trans-retinol + hexadecanoate + H(+). It carries out the reaction 1,2,3-tri-(9Z-octadecenoyl)-glycerol + all-trans-retinol = all-trans-retinyl 9Z-octadecenoate + di-(9Z)-octadecenoylglycerol. Its activity is regulated as follows. The triglyceride lipase activity is inhibited by BEL ((E)-6-(bromomethylene)-3-(1-naphthalenyl)-2H-tetrahydropyran-2-one), a suicide substrate inhibitor. In terms of biological role, has abundant triacylglycerol lipase activity. Transfers fatty acid from triglyceride to retinol, hydrolyzes retinylesters, and generates 1,3-diacylglycerol from triglycerides. Additionally possesses acylglycerol transacylase and phospholipase A2 activities. The sequence is that of Patatin-like phospholipase domain-containing protein 4 from Homo sapiens (Human).